The sequence spans 179 residues: Shikimate kinase (179 aa).

14–19 (GAGKTT) lines the ATP pocket. Residue Thr-18 participates in Mg(2+) binding. 3 residues coordinate substrate: Asp-36, Arg-60, and Gly-82. Arg-120 provides a ligand contact to ATP. Arg-139 is a substrate binding site.

Belongs to the shikimate kinase family. As to quaternary structure, monomer. It depends on Mg(2+) as a cofactor.

It is found in the cytoplasm. It carries out the reaction shikimate + ATP = 3-phosphoshikimate + ADP + H(+). It participates in metabolic intermediate biosynthesis; chorismate biosynthesis; chorismate from D-erythrose 4-phosphate and phosphoenolpyruvate: step 5/7. In terms of biological role, catalyzes the specific phosphorylation of the 3-hydroxyl group of shikimic acid using ATP as a cosubstrate. The polypeptide is Shikimate kinase (Methylococcus capsulatus (strain ATCC 33009 / NCIMB 11132 / Bath)).